The primary structure comprises 333 residues: uncharacterized protein (333 aa).

This is an uncharacterized protein from Escherichia coli (Bacteriophage T4).